A 688-amino-acid chain; its full sequence is Sodium channel and clathrin linker 1 (688 aa).

A2 bears the N-acetylalanine mark. Residues 59-673 (LIAEYEKHLE…SASQQLSVIT (615 aa)) are a coiled coil. S681 carries the post-translational modification Phosphoserine.

As to quaternary structure, interacts with SCN10A and clathrin. Identified in a complex containing SCN10A, clathrin and SCLT1. As to expression, detected in small neurons in dorsal root ganglia. Detected in C-type fibers of sciatic nerve (at protein level).

The protein resides in the cytoplasm. Its subcellular location is the cytoskeleton. The protein localises to the microtubule organizing center. It localises to the centrosome. It is found in the centriole. Functionally, adapter protein that links SCN10A to clathrin. Regulates SCN10A channel activity, possibly by promoting channel internalization. This chain is Sodium channel and clathrin linker 1 (Sclt1), found in Rattus norvegicus (Rat).